The chain runs to 298 residues: Protein ILRUN (298 aa).

Residues 199 to 277 (NTQPHRKVEG…SVNLSPSSHA (79 aa)) form a disordered region. Phosphoserine is present on residues Ser-215 and Ser-222. A compositionally biased stretch (low complexity) spans 242–255 (TWAPAPDTWAPAPD). Over residues 262–277 (NRLSQNSVNLSPSSHA) the composition is skewed to polar residues. A Phosphoserine modification is found at Ser-272.

In terms of assembly, interacts with IRF3; the interaction inhibits IRF3 binding to its DNA consensus sequence. Expressed in lung (at protein level).

The protein resides in the cytoplasm. Its subcellular location is the nucleus. In terms of biological role, negative regulator of innate antiviral response. Blocks IRF3-dependent cytokine production such as IFNA, IFNB and TNF. Interacts with IRF3 and inhibits IRF3 recruitment to type I IFN promoter sequences while also reducing nuclear levels of the coactivators EP300 and CREBBP. This is Protein ILRUN from Homo sapiens (Human).